The primary structure comprises 366 residues: uncharacterized protein (366 aa).

Residues 199-267 form a disordered region; it reads QKKQIEDEEK…QLKDAQAKRD (69 aa).

This is an uncharacterized protein from Haemophilus influenzae (strain ATCC 51907 / DSM 11121 / KW20 / Rd).